A 349-amino-acid chain; its full sequence is UDP-N-acetylenolpyruvoylglucosamine reductase (349 aa).

The region spanning 24–197 is the FAD-binding PCMH-type domain; the sequence is FGIDATARFA…VAVTFRLPKR (174 aa). R173 is an active-site residue. S249 (proton donor) is an active-site residue. Residue E345 is part of the active site.

It belongs to the MurB family. Requires FAD as cofactor.

It localises to the cytoplasm. It catalyses the reaction UDP-N-acetyl-alpha-D-muramate + NADP(+) = UDP-N-acetyl-3-O-(1-carboxyvinyl)-alpha-D-glucosamine + NADPH + H(+). Its pathway is cell wall biogenesis; peptidoglycan biosynthesis. Functionally, cell wall formation. The chain is UDP-N-acetylenolpyruvoylglucosamine reductase from Burkholderia ambifaria (strain ATCC BAA-244 / DSM 16087 / CCUG 44356 / LMG 19182 / AMMD) (Burkholderia cepacia (strain AMMD)).